The chain runs to 555 residues: MIWVAVVITMLLFILVAKPTGIYLEKAFQGSKKLDKVFGPFEKLIFKITGVKEYNQTWKQYALSLVLLNGFMIVVVYFIFRLQGVLPLNPAHIEGMEPTLAFNTAISFMADTNLQHYSGENGLSYLSQLIGITFLMFAAPATTLALVMAFIRGLAGKELGNFFIDFTRALTRVFLPIAFMAALVFVALGVPQTLDGAVTAQTIDGAKQSILRGPVASFVAIKELGNNGGGFFGANSTHPFENPGQMSNILQMMLMMLLPTALPFTYGRMVGNKKQGRILFVSLFMVFLLGFITITTSELNGNPALNAMGIEHVQGSTEGKEVRFGTVFSSLYATVTTAAETGAVNTMHDTLTPIGGLVPLVNMMLNTVYGGVGAGFVNIIMYAIIAVFISGLMVGRTPEFLGKKIEGKEMKLIAVTILFHPLLILGFSALALSTSLGTDAISHSGFHGLTQVVYEYTSSAANNGSGFEGLGDNTPFWNITTGLVMFLGRYFSLITMLAVAASLKEKTVVPETVGTFRTDNGLFGGIFIGTIVIVGALTFFPMLVLGPIAEFLTLK.

10 helical membrane passes run 2–22, 60–80, 130–150, 173–193, 246–266, 278–298, 374–394, 412–432, 483–503, and 525–545; these read IWVA…PTGI, QYAL…YFIF, IGIT…VMAF, VFLP…VPQT, MSNI…PFTY, ILFV…TTSE, AGFV…GLMV, LIAV…ALAL, LVMF…AASL, and GIFI…MLVL.

It belongs to the KdpA family. As to quaternary structure, the system is composed of three essential subunits: KdpA, KdpB and KdpC.

The protein resides in the cell membrane. Functionally, part of the high-affinity ATP-driven potassium transport (or Kdp) system, which catalyzes the hydrolysis of ATP coupled with the electrogenic transport of potassium into the cytoplasm. This subunit binds the extracellular potassium ions and delivers the ions to the membrane domain of KdpB through an intramembrane tunnel. In Bacillus anthracis (strain A0248), this protein is Potassium-transporting ATPase potassium-binding subunit.